The primary structure comprises 149 residues: Large ribosomal subunit protein bL9 (149 aa).

This sequence belongs to the bacterial ribosomal protein bL9 family.

Its function is as follows. Binds to the 23S rRNA. The chain is Large ribosomal subunit protein bL9 from Geobacillus thermodenitrificans (strain NG80-2).